We begin with the raw amino-acid sequence, 165 residues long: Protein SprT (165 aa).

Positions 22–163 (LAQANLKLGC…RCVHCGEQLV (142 aa)) constitute a SprT-like domain. His-78 serves as a coordination point for Zn(2+). Glu-79 is a catalytic residue. Residue His-82 participates in Zn(2+) binding.

This sequence belongs to the SprT family. The cofactor is Zn(2+).

The protein localises to the cytoplasm. The chain is Protein SprT from Shigella dysenteriae serotype 1 (strain Sd197).